Consider the following 365-residue polypeptide: MNTLGCFLRLTTFGESHGDMIGGVLDGMPSGIKIDYALLENEMKRRQGGRNVFITPRKEDDKVEITSGVFEDFSTGTPIGFLIHNQRARSKDYDNIKNLFRPSHADFTYFHKYGIRDFRGGGRSSARESAIRVAAGAFAKMLLREIGIVCESGIIEIGGIEAKNYDFNHALKSEIFALDKEQEEAQKTAIQNAIKNHDSIGGVALIRARSVKRNQKLPIGLGQGLYAKLDAKIAEAMMGLNGVKAVEIGKGVESSLLKGSEYNDLMDQKGFLSNRSGGVLGGMSNGEEIIVRVHFKPTPSIFQPQQTIDINNHECECLLKGRHDPCIAIRGSVVCESLLSLVLADMVLLNLTSKIEYLKTIYNEN.

NADP(+) is bound at residue Arg-46. FMN-binding positions include 123–125 (RSS), 241–242 (NG), Gly-281, 296–300 (KPTPS), and Arg-322.

It belongs to the chorismate synthase family. As to quaternary structure, homotetramer. The cofactor is FMNH2.

It catalyses the reaction 5-O-(1-carboxyvinyl)-3-phosphoshikimate = chorismate + phosphate. It functions in the pathway metabolic intermediate biosynthesis; chorismate biosynthesis; chorismate from D-erythrose 4-phosphate and phosphoenolpyruvate: step 7/7. Catalyzes the anti-1,4-elimination of the C-3 phosphate and the C-6 proR hydrogen from 5-enolpyruvylshikimate-3-phosphate (EPSP) to yield chorismate, which is the branch point compound that serves as the starting substrate for the three terminal pathways of aromatic amino acid biosynthesis. This reaction introduces a second double bond into the aromatic ring system. This chain is Chorismate synthase, found in Helicobacter pylori (strain HPAG1).